Here is a 614-residue protein sequence, read N- to C-terminus: 1-deoxy-D-xylulose-5-phosphate synthase (614 aa).

Thiamine diphosphate contacts are provided by residues H74 and 115-117; that span reads AHS. D146 lines the Mg(2+) pocket. Residues 147–148, N175, Y282, and E363 contribute to the thiamine diphosphate site; that span reads GA. N175 contributes to the Mg(2+) binding site.

It belongs to the transketolase family. DXPS subfamily. Homodimer. Mg(2+) serves as cofactor. The cofactor is thiamine diphosphate.

It carries out the reaction D-glyceraldehyde 3-phosphate + pyruvate + H(+) = 1-deoxy-D-xylulose 5-phosphate + CO2. It functions in the pathway metabolic intermediate biosynthesis; 1-deoxy-D-xylulose 5-phosphate biosynthesis; 1-deoxy-D-xylulose 5-phosphate from D-glyceraldehyde 3-phosphate and pyruvate: step 1/1. Catalyzes the acyloin condensation reaction between C atoms 2 and 3 of pyruvate and glyceraldehyde 3-phosphate to yield 1-deoxy-D-xylulose-5-phosphate (DXP). The sequence is that of 1-deoxy-D-xylulose-5-phosphate synthase from Nitrosomonas europaea (strain ATCC 19718 / CIP 103999 / KCTC 2705 / NBRC 14298).